The sequence spans 401 residues: tRNA(Ile)-lysidine synthase (401 aa).

17–22 (SGGPDS) is a binding site for ATP.

Belongs to the tRNA(Ile)-lysidine synthase family.

The protein resides in the cytoplasm. It carries out the reaction cytidine(34) in tRNA(Ile2) + L-lysine + ATP = lysidine(34) in tRNA(Ile2) + AMP + diphosphate + H(+). In terms of biological role, ligates lysine onto the cytidine present at position 34 of the AUA codon-specific tRNA(Ile) that contains the anticodon CAU, in an ATP-dependent manner. Cytidine is converted to lysidine, thus changing the amino acid specificity of the tRNA from methionine to isoleucine. This chain is tRNA(Ile)-lysidine synthase, found in Mycoplasma mycoides subsp. mycoides SC (strain CCUG 32753 / NCTC 10114 / PG1).